The primary structure comprises 91 residues: Small ribosomal subunit protein uS19 (91 aa).

Belongs to the universal ribosomal protein uS19 family.

In terms of biological role, protein S19 forms a complex with S13 that binds strongly to the 16S ribosomal RNA. This Prochlorococcus marinus (strain MIT 9303) protein is Small ribosomal subunit protein uS19.